Here is an 89-residue protein sequence, read N- to C-terminus: MAKKSKIAKDKKQREIVAIYAEKRRALKEAGDYQGLSSLPKDASPVRLRNRDSLDGRPRAYMRKFGVSRITFRELAHKGEIPGVKKASW.

It belongs to the universal ribosomal protein uS14 family. As to quaternary structure, part of the 30S ribosomal subunit. Contacts proteins S3 and S10.

In terms of biological role, binds 16S rRNA, required for the assembly of 30S particles and may also be responsible for determining the conformation of the 16S rRNA at the A site. This is Small ribosomal subunit protein uS14 from Acholeplasma laidlawii (strain PG-8A).